The following is a 456-amino-acid chain: TGACG-sequence-specific DNA-binding protein TGA-2.1 (456 aa).

2 disordered regions span residues 1–41 (MASK…NTSR) and 115–170 (SASG…QKTL). 2 stretches are compositionally biased toward polar residues: residues 9-41 (GNRSGTTGMPSFISQIPVSNPMGTEANNTNTSR) and 125-141 (GESNMADSGSRTDTSTD). A compositionally biased stretch (basic and acidic residues) spans 158–169 (DKSKEKVLDQKT). The 64-residue stretch at 166-229 (DQKTLRRLAQ…NIADQSNGVG (64 aa)) folds into the bZIP domain. Residues 167–220 (QKTLRRLAQNREAARKSRLRKKAYVQQLENSRLKLSQLEQDLQRARQQGKYISN) adopt a coiled-coil conformation. The tract at residues 168-188 (KTLRRLAQNREAARKSRLRKK) is basic motif. Residues 194–208 (LENSRLKLSQLEQDL) are leucine-zipper. Residues 233–450 (PLAFDAEYSR…RALSSLWLAR (218 aa)) form the DOG1 domain.

This sequence belongs to the bZIP family. Can form heterodimer with TGA2.2.

Its subcellular location is the nucleus. Functionally, transcriptional activator that binds specifically to the DNA sequence 5'-TGACG-3'. Recognizes ocs elements like the as-1 motif of the cauliflower mosaic virus 35S promoter. Binding to the as-1-like cis elements mediate auxin- and salicylic acid-inducible transcription. The chain is TGACG-sequence-specific DNA-binding protein TGA-2.1 (TGA21) from Nicotiana tabacum (Common tobacco).